A 353-amino-acid polypeptide reads, in one-letter code: Survival factor 2 (353 aa).

It belongs to the SVF1 family.

It is found in the cytoplasm. Its subcellular location is the nucleus. In Schizosaccharomyces pombe (strain 972 / ATCC 24843) (Fission yeast), this protein is Survival factor 2 (svf2).